A 155-amino-acid polypeptide reads, in one-letter code: Ribosomal RNA large subunit methyltransferase H (155 aa).

Residues leucine 72, glycine 103, and 122–127 (LSPLTL) each bind S-adenosyl-L-methionine.

It belongs to the RNA methyltransferase RlmH family. In terms of assembly, homodimer.

It is found in the cytoplasm. It catalyses the reaction pseudouridine(1915) in 23S rRNA + S-adenosyl-L-methionine = N(3)-methylpseudouridine(1915) in 23S rRNA + S-adenosyl-L-homocysteine + H(+). Specifically methylates the pseudouridine at position 1915 (m3Psi1915) in 23S rRNA. This chain is Ribosomal RNA large subunit methyltransferase H, found in Haemophilus ducreyi (strain 35000HP / ATCC 700724).